The primary structure comprises 229 residues: Vacuolar protein-sorting-associated protein 60 (229 aa).

Positions 9–155 form a coiled coil; sequence NKKSHDQLLQ…QGDELQEVLA (147 aa). Serine 12 carries the phosphoserine modification. The interaction with VTA1 stretch occupies residues 128–159; sequence INIDKLQDMQDEMLDLIEQGDELQEVLAMNNN. Residues 186 to 229 form a disordered region; that stretch reads PTSENSLGNDMPSYLLGANAPPAFIDEEPNLDTEDKNKALESAQ. The segment covering 218 to 229 has biased composition (basic and acidic residues); the sequence is TEDKNKALESAQ.

It belongs to the SNF7 family. In terms of assembly, interacts with VTA1; the interaction occurs at he endosomal membrane.

Its subcellular location is the endosome membrane. The protein resides in the vacuole membrane. Its function is as follows. Has a role in a late stage of multivesicular body (MVB) formation. Can stimulate VPS4 ATPase activity via VTA1. This Saccharomyces cerevisiae (strain ATCC 204508 / S288c) (Baker's yeast) protein is Vacuolar protein-sorting-associated protein 60 (VPS60).